We begin with the raw amino-acid sequence, 338 residues long: GTP 3',8-cyclase (338 aa).

Residues 8 to 227 (KLQRPLKDLR…DMIHQVMPLE (220 aa)) form the Radical SAM core domain. Residue Arg17 coordinates GTP. Residues Cys24 and Cys28 each coordinate [4Fe-4S] cluster. An S-adenosyl-L-methionine-binding site is contributed by Tyr30. Cys31 contributes to the [4Fe-4S] cluster binding site. Arg71 is a binding site for GTP. Gly75 provides a ligand contact to S-adenosyl-L-methionine. Residue Thr102 coordinates GTP. Ser126 provides a ligand contact to S-adenosyl-L-methionine. Residue Lys163 participates in GTP binding. Met197 contributes to the S-adenosyl-L-methionine binding site. Cys261 and Cys264 together coordinate [4Fe-4S] cluster. 266–268 (RAR) lines the GTP pocket. Residue Cys278 participates in [4Fe-4S] cluster binding.

It belongs to the radical SAM superfamily. MoaA family. Monomer and homodimer. Requires [4Fe-4S] cluster as cofactor.

It carries out the reaction GTP + AH2 + S-adenosyl-L-methionine = (8S)-3',8-cyclo-7,8-dihydroguanosine 5'-triphosphate + 5'-deoxyadenosine + L-methionine + A + H(+). The protein operates within cofactor biosynthesis; molybdopterin biosynthesis. In terms of biological role, catalyzes the cyclization of GTP to (8S)-3',8-cyclo-7,8-dihydroguanosine 5'-triphosphate. In Bacillus anthracis (strain CDC 684 / NRRL 3495), this protein is GTP 3',8-cyclase.